A 97-amino-acid chain; its full sequence is RxLR effector protein CRE10 (97 aa).

An N-terminal signal peptide occupies residues 1–21 (MRLSYILVVVIAVTLQACVCA). Positions 48-66 (RLLRGVKKRTAEREVQEER) match the RxLR-dEER motif.

The protein belongs to the RxLR effector family.

Its subcellular location is the secreted. It is found in the host cell. Its function is as follows. Effector that is involved in host plant infection. Contributes to virulence during the early infection stage, by inhibiting plant defense responses induced by both PAMP-triggered immunity (PTI) and effector-triggered immunity (ETI). The protein is RxLR effector protein CRE10 of Phytophthora infestans (strain T30-4) (Potato late blight agent).